The primary structure comprises 66 residues: Conotoxin Lt3.5 (66 aa).

The first 20 residues, 1–20, serve as a signal peptide directing secretion; that stretch reads MMSKLGALLTICLLLFPLTA. Positions 21-53 are excised as a propeptide; sequence VPLDGDQPLDRHAERMHDGISPKRHPWFDPVKR. 3 cysteine pairs are disulfide-bonded: Cys-54/Cys-66, Cys-55/Cys-62, and Cys-59/Cys-65. A 4-hydroxyproline modification is found at Pro-64.

Belongs to the conotoxin M superfamily. Expressed by the venom duct.

It localises to the secreted. This chain is Conotoxin Lt3.5, found in Conus litteratus (Lettered cone).